Here is a 397-residue protein sequence, read N- to C-terminus: Probable sugar efflux transporter (397 aa).

The next 12 helical transmembrane spans lie at 15–35, 51–71, 80–100, 103–123, 137–157, 169–189, 209–229, 246–266, 277–297, 299–319, 333–353, and 365–385; these read VIVMAFAAFVFNTTEFVPVAL, GLMITIYAWIVSLCSLPCMLM, LLISLFILFIASHILSAFAWN, VLLIARAGVALTHSIFWSITA, QALGLLALGSSLAMVLGLPLG, TFTLIGVFAALILILIVRLLP, PMLITLYIFTILVISAHFTAY, KATAVLLIFGVSGVVASVLFS, LLSSVAILTLALICLYGVSGI, GAIFALVFIWGVAISALSLAM, VATAIYSGIYNIGIGGGALIG, and IGYVGAVLGAVSIIWFILMFL.

The protein belongs to the major facilitator superfamily. SotB (TC 2.A.1.2) family.

Its subcellular location is the cell inner membrane. Involved in the efflux of sugars. The physiological role may be the reduction of the intracellular concentration of toxic sugars or sugar metabolites. This chain is Probable sugar efflux transporter, found in Mannheimia succiniciproducens (strain KCTC 0769BP / MBEL55E).